The chain runs to 376 residues: Lysocardiolipin acyltransferase 1 (376 aa).

Residues 9–29 (FILFLFAGSFFGSIFMLGPIL) form a helical membrane-spanning segment. Asn-35 is a glycosylation site (N-linked (GlcNAc...) asparagine). A helical membrane pass occupies residues 48–68 (ATWLTLPVALLETMFGVRVVI). Positions 85–90 (HRTRVD) match the HXXXXD motif motif. Residue Lys-183 is modified to N6-acetyllysine. 2 helical membrane-spanning segments follow: residues 309 to 329 (LLSIVYWALFCSAMCLLIYLY) and 336 to 356 (FIISIVFFVLQERIFGGLEII).

The protein belongs to the 1-acyl-sn-glycerol-3-phosphate acyltransferase family. As to expression, widely expressed with highest expression in heart, liver and 12.5 dpc aorta-gonad-mesonephros and lower levels in the 16 dpc fetal liver and adult bone marrow. In bone marrow, highest levels are found in B-cells compared with whole bone marrow, T-cells, erythrocytes, and granulocytes.

Its subcellular location is the endoplasmic reticulum membrane. The enzyme catalyses a 1-acyl-sn-glycero-3-phosphate + an acyl-CoA = a 1,2-diacyl-sn-glycero-3-phosphate + CoA. The catalysed reaction is a 1-acyl-sn-glycero-3-phospho-(1D-myo-inositol) + an acyl-CoA = a 1,2-diacyl-sn-glycero-3-phospho-(1D-myo-inositol) + CoA. It carries out the reaction 1-acyl-sn-glycero-3-phospho-(1'-sn-glycerol) + an acyl-CoA = a 1,2-diacyl-sn-glycero-3-phospho-(1'-sn-glycerol) + CoA. It catalyses the reaction 1-hexadecanoyl-sn-glycero-3-phosphate + (9Z)-octadecenoyl-CoA = 1-hexadecanoyl-2-(9Z-octadecenoyl)-sn-glycero-3-phosphate + CoA. The enzyme catalyses 1-(9Z-octadecenoyl)-sn-glycero-3-phosphate + (9Z)-octadecenoyl-CoA = 1,2-di-(9Z-octadecenoyl)-sn-glycero-3-phosphate + CoA. The catalysed reaction is 1-(9Z,12Z)-octadecadienoyl-sn-glycero-3-phosphate + (9Z)-octadecenoyl-CoA = 1-(9Z,12Z)-octadecadienoyl-2-(9Z)-octadecenoyl-sn-glycero-3-phosphate + CoA. It carries out the reaction 1-(9Z,12Z,15Z)-octadecatrienoyl-sn-glycero-3-phosphate + (9Z)-octadecenoyl-CoA = 1-(9Z,12Z,15Z)-octadecatrienoyl-2-(9Z)-octadecenoyl-sn-glycero-3-phosphate + CoA. It catalyses the reaction 1-(9Z-octadecenoyl)-sn-glycero-3-phosphate + hexadecanoyl-CoA = 1-(9Z)-octadecenoyl-2-hexadecanoyl-sn-glycero-3-phosphate + CoA. The enzyme catalyses 1-(9Z-octadecenoyl)-sn-glycero-3-phosphate + octadecanoyl-CoA = 1-(9Z-octadecenoyl)-2-octadecanoyl-sn-glycero-3-phosphate + CoA. The catalysed reaction is 1-acyl-sn-glycero-3-phospho-(1'-sn-glycerol) + (9Z)-octadecenoyl-CoA = 1-acyl-2-(9Z-octadecenoyl)-sn-glycero-3-phospho-(1'-sn-glycerol) + CoA. It carries out the reaction a 1-acyl-sn-glycero-3-phospho-(1D-myo-inositol) + (9Z)-octadecenoyl-CoA = a 1-acyl-2-(9Z-octadecenoyl)-sn-glycero-3-phospho-(1D-myo-inositol) + CoA. It catalyses the reaction 1-hexadecanoyl-sn-glycero-3-phospho-(1D-myo-inositol) + hexadecanoyl-CoA = 1,2-dihexadecanoyl-sn-glycero-3-phospho-(1D-myo-inositol) + CoA. The enzyme catalyses 1-hexadecanoyl-sn-glycero-3-phospho-(1D-myo-inositol) + octadecanoyl-CoA = 1-hexadecanoyl-2-octadecanoyl-sn-glycero-3-phospho-(1D-myo-inositol) + CoA. The catalysed reaction is 1-hexadecanoyl-sn-glycero-3-phospho-(1D-myo-inositol) + (9Z)-octadecenoyl-CoA = 1-hexadecanoyl-2-(9Z-octadecenoyl)-sn-glycero-3-phospho-(1D-myo-inositol) + CoA. It carries out the reaction 1-hexadecanoyl-sn-glycero-3-phospho-(1D-myo-inositol) + (9Z,12Z)-octadecadienoyl-CoA = 1-hexadecanoyl-2-(9Z,12Z-octadecadienoyl)-sn-glycero-3-phospho-(1D-myo-inositol) + CoA. It catalyses the reaction 1-hexadecanoyl-sn-glycero-3-phospho-(1D-myo-inositol) + (5Z,8Z,11Z,14Z)-eicosatetraenoyl-CoA = 1-hexadecanoyl-2-(5Z,8Z,11Z,14Z-eicosatetraenoyl)-sn-glycero-3-phospho-D-myo-inositol + CoA. The enzyme catalyses 1-hexadecanoyl-sn-glycero-3-phospho-(1'-sn-glycerol) + hexadecanoyl-CoA = 1,2-dihexadecanoyl-sn-glycero-3-phospho-(1'-sn-glycerol) + CoA. The catalysed reaction is 1-hexadecanoyl-sn-glycero-3-phospho-(1'-sn-glycerol) + octadecanoyl-CoA = 1-hexadecanoyl-2-octadecanoyl-sn-glycero-3-phospho-(1'-sn-glycerol) + CoA. It carries out the reaction 1-hexadecanoyl-sn-glycero-3-phospho-(1'-sn-glycerol) + (9Z)-octadecenoyl-CoA = 1-hexadecanoyl-2-(9Z-octadecenoyl)-sn-glycero-3-phospho-(1'-sn-glycerol) + CoA. It catalyses the reaction 1-hexadecanoyl-sn-glycero-3-phospho-(1'-sn-glycerol) + (9Z,12Z)-octadecadienoyl-CoA = 1-hexadecanoyl-2-(9Z,12Z-octadecadienoyl)-sn-glycero-3-phospho-(1'-sn-glycerol) + CoA. The enzyme catalyses 1-tetradecanoyl-sn-glycero-3-phospho-(1'-sn-glycerol) + (9Z)-octadecenoyl-CoA = 1-tetradecanoyl-2-(9Z-octadecenoyl)-sn-glycero-3-phospho-(1'-sn-glycerol) + CoA. The catalysed reaction is 1-octadecanoyl-sn-glycero-3-phospho-(1'-sn-glycerol) + (9Z)-octadecenoyl-CoA = 1-octadecanoyl-2-(9Z-octadecenoyl)-sn-glycero-3-phospho-(1'-sn-glycerol) + CoA. It carries out the reaction 1-(9Z-octadecenoyl)-sn-glycero-3-phospho-(1'-sn-glycerol) + (9Z)-octadecenoyl-CoA = 1,2-di-(9Z-octadecenoyl)-sn-glycero-3-phospho-(1'-sn-glycerol) + CoA. It catalyses the reaction 1-hexadecanoyl-sn-glycero-3-phospho-(1D-myo-inositol) + dodecanoyl-CoA = 1-hexadecanoyl-2-dodecanoyl-sn-glycero-3-phospho-(1D-myo-inositol) + CoA. The enzyme catalyses 1',3'-bis-[1-acyl-sn-glycero-3-phospho]-glycerol + (9Z)-octadecenoyl-CoA = 1'-[1-acyl-2-(9Z)-octadecenoyl-sn-glycero-3-phospho],3'-[1-acyl,2-hydroxy-sn-glycero-3-phospho]-glycerol + CoA. The catalysed reaction is 1'-[1,2-diacyl-sn-glycero-3-phospho],3'-[1-acyl-sn-glycero-3-phospho]-glycerol + (9Z)-octadecenoyl-CoA = 1'-[1,2-diacyl-sn-glycero-3-phospho],3'-[1-acyl,2-(9Z)-octadecenoyl-sn-glycero-3-phospho]-glycerol + CoA. It carries out the reaction 1'-[1,2-diacyl-sn-glycero-3-phospho],3'-[1-acyl-sn-glycero-3-phospho]-glycerol + (9Z,12Z)-octadecadienoyl-CoA = 1'-[1,2-diacyl-sn-glycero-3-phospho],3'-[1-acyl,2-(9Z,12Z)-octadecadienoyl-sn-glycero-3-phospho]-glycerol + CoA. It catalyses the reaction 1'-[1,2-diacyl-sn-glycero-3-phospho],3'-[1-acyl-sn-glycero-3-phospho]-glycerol + dodecanoyl-CoA = 1'-[1,2-diacyl-sn-glycero-3-phospho],3'-[1-acyl,2-dodecanoyl-sn-glycero-3-phospho]-glycerol + CoA. The enzyme catalyses 1',3'-bis-[1-acyl-sn-glycero-3-phospho]-glycerol + dodecanoyl-CoA = 1'-[1-acyl-2-dodecanoyl-sn-glycero-3-phospho],3'-[1-acyl,2-hydroxy-sn-glycero-3-phospho]-glycerol + CoA. The catalysed reaction is a 1-acyl-sn-glycero-3-phosphate + (9Z)-octadecenoyl-CoA = a 1-acyl-2-(9Z-octadecenoyl)-sn-glycero-3-phosphate + CoA. It carries out the reaction 1',3'-bis-[1-acyl-sn-glycero-3-phospho]-glycerol + (9Z,12Z)-octadecadienoyl-CoA = 1'-[1-acyl-2-(9Z,12Z)-octadecadienoyl-sn-glycero-3-phospho],3'-[1-acyl,2-hydroxy-sn-glycero-3-phospho]-glycerol + CoA. It catalyses the reaction 1',3'-bis-[1-acyl-sn-glycero-3-phospho]-glycerol + hexadecanoyl-CoA = 1'-[1-acyl-2-hexadecanoyl-sn-glycero-3-phospho],3'-[1-acyl,2-hydroxy-sn-glycero-3-phospho]-glycerol + CoA. The enzyme catalyses 1',3'-bis-[1-acyl-sn-glycero-3-phospho]-glycerol + octadecanoyl-CoA = 1'-[1-acyl-2-octadecanoyl-sn-glycero-3-phospho],3'-[1-acyl,2-hydroxy-sn-glycero-3-phospho]-glycerol + CoA. The catalysed reaction is 1'-[1,2-diacyl-sn-glycero-3-phospho],3'-[1-acyl-sn-glycero-3-phospho]-glycerol + octanoyl-CoA = 1'-[1,2-diacyl-sn-glycero-3-phospho],3'-[1-acyl,2-octanoyl-sn-glycero-3-phospho]-glycerol + CoA. It carries out the reaction 1',3'-bis-[1-acyl-sn-glycero-3-phospho]-glycerol + octanoyl-CoA = 1'-[1-acyl-2-octanoyl-sn-glycero-3-phospho],3'-[1-acyl,2-hydroxy-sn-glycero-3-phospho]-glycerol + CoA. It catalyses the reaction 1'-[1,2-diacyl-sn-glycero-3-phospho],3'-[1-acyl-sn-glycero-3-phospho]-glycerol + hexadecanoyl-CoA = 1'-[1,2-diacyl-sn-glycero-3-phospho],3'-[1-acyl,2-hexadecanoyl-sn-glycero-3-phospho]-glycerol + CoA. The enzyme catalyses 1'-[1,2-diacyl-sn-glycero-3-phospho],3'-[1-acyl-sn-glycero-3-phospho]-glycerol + (5Z,8Z,11Z,14Z)-eicosatetraenoyl-CoA = 1'-[1,2-diacyl-sn-glycero-3-phospho],3'-[1-acyl,2-(5Z,8Z,11Z,14Z)-eicosatetraenoyl-sn-glycero-3-phospho]-glycerol + CoA. The catalysed reaction is 1',3'-bis-[1-acyl-sn-glycero-3-phospho]-glycerol + (5Z,8Z,11Z,14Z)-eicosatetraenoyl-CoA = 1'-[1-acyl-2-(5Z,8Z,11Z,14Z)-eicosatetraenoyl-sn-glycero-3-phospho],3'-[1-acyl,2-hydroxy-sn-glycero-3-phospho]-glycerol + CoA. It carries out the reaction a 1-acyl-sn-glycero-3-phospho-(1D-myo-inositol) + octadecanoyl-CoA = a 1-acyl-2-octadecanoyl-sn-glycero-3-phospho-(1D-myo-inositol) + CoA. It catalyses the reaction a 2-acyl-sn-glycero-3-phospho-D-myo-inositol + octadecanoyl-CoA = 1-octadecanoyl-2-acyl-sn-glycero-3-phospho-1D-myo-inositol + CoA. The protein operates within phospholipid metabolism; CDP-diacylglycerol biosynthesis; CDP-diacylglycerol from sn-glycerol 3-phosphate: step 2/3. In terms of biological role, exhibits acyl-CoA:lysocardiolipin acyltransferase (ALCAT) activity; catalyzes the reacylation of lyso-cardiolipin to cardiolipin (CL), a key step in CL remodeling. Recognizes both monolysocardiolipin and dilysocardiolipin as substrates with a preference for linoleoyl-CoA and oleoyl-CoA as acyl donors. Also exhibits 1-acyl-sn-glycerol-3-phosphate acyltransferase activity (AGPAT) activity; converts 1-acyl-sn-glycerol-3- phosphate (lysophosphatidic acid or LPA) into 1,2-diacyl-sn-glycerol-3- phosphate (phosphatidic acid or PA) by incorporating an acyl moiety at the sn-2 position of the glycerol backbone. Possesses lysophosphatidylinositol acyltransferase (LPIAT) activity. Possesses lysophosphatidylglycerol acyltransferase (LPGAT) activity. Required for establishment of the hematopoietic and endothelial lineages. The sequence is that of Lysocardiolipin acyltransferase 1 (Lclat1) from Mus musculus (Mouse).